A 94-amino-acid polypeptide reads, in one-letter code: Cystatin-A1 (94 aa).

The Secondary area of contact signature appears at 45–49 (QLVAG).

Belongs to the cystatin family.

The protein resides in the cytoplasm. Its function is as follows. Intracellular thiol proteinase inhibitor. Inhibits papain, but not cathepsin B. The protein is Cystatin-A1 (cpiA) of Dictyostelium discoideum (Social amoeba).